Here is a 417-residue protein sequence, read N- to C-terminus: Tol-Pal system protein TolB (417 aa).

Positions 1-16 are cleaved as a signal peptide; it reads MRYLWLFLIGTIGLFA.

Belongs to the TolB family. As to quaternary structure, the Tol-Pal system is composed of five core proteins: the inner membrane proteins TolA, TolQ and TolR, the periplasmic protein TolB and the outer membrane protein Pal. They form a network linking the inner and outer membranes and the peptidoglycan layer.

It localises to the periplasm. In terms of biological role, part of the Tol-Pal system, which plays a role in outer membrane invagination during cell division and is important for maintaining outer membrane integrity. The protein is Tol-Pal system protein TolB of Helicobacter pylori (strain HPAG1).